The sequence spans 420 residues: Probable ABC transporter-binding protein DR_1438 (420 aa).

The signal sequence occupies residues 1–24; the sequence is MKKFAAVLGLTVAFAAASQAHAVT.

This sequence belongs to the bacterial solute-binding protein 1 family.

Probably part of a binding-protein-dependent transport system. The polypeptide is Probable ABC transporter-binding protein DR_1438 (Deinococcus radiodurans (strain ATCC 13939 / DSM 20539 / JCM 16871 / CCUG 27074 / LMG 4051 / NBRC 15346 / NCIMB 9279 / VKM B-1422 / R1)).